A 216-amino-acid polypeptide reads, in one-letter code: MTEQLIDIAALRREYTRGGLRRADLTAEPMDLFEQWLKQACAAQLPDATAMSVGTVDENGQPYQRLVLLKHFDRQGMVFYTNLGSRKAAHLAHNPRISLHFPWHVLERQVLVLGRAERLSVIEVMKYFHSRPRDSQIGAWVSRQSSRISSRGVLESKFLELKQKFAQGDVPLPSFWGGYRVSIEAMEFWQGGEHRMHDRFLYRRENGGWHIDRLAP.

Residues R12–Y15 and K70 contribute to the substrate site. FMN-binding positions include R65–K70, Y80–T81, R86, K87, and Q109. Substrate contacts are provided by Y127, R131, and S135. Residues Q144 to S145 and W189 contribute to the FMN site. R195–H197 provides a ligand contact to substrate. Residue R199 coordinates FMN.

It belongs to the pyridoxamine 5'-phosphate oxidase family. Homodimer. FMN is required as a cofactor.

The catalysed reaction is pyridoxamine 5'-phosphate + O2 + H2O = pyridoxal 5'-phosphate + H2O2 + NH4(+). It carries out the reaction pyridoxine 5'-phosphate + O2 = pyridoxal 5'-phosphate + H2O2. Its pathway is cofactor metabolism; pyridoxal 5'-phosphate salvage; pyridoxal 5'-phosphate from pyridoxamine 5'-phosphate: step 1/1. The protein operates within cofactor metabolism; pyridoxal 5'-phosphate salvage; pyridoxal 5'-phosphate from pyridoxine 5'-phosphate: step 1/1. In terms of biological role, catalyzes the oxidation of either pyridoxine 5'-phosphate (PNP) or pyridoxamine 5'-phosphate (PMP) into pyridoxal 5'-phosphate (PLP). This Sodalis glossinidius (strain morsitans) protein is Pyridoxine/pyridoxamine 5'-phosphate oxidase.